The sequence spans 296 residues: MNDYLGAHMSIAGGIHKAPARGNRVGCGVIQVFTQNSNQWRGKMPTEGEAALFREQWEAAGLHEIIAHDIYLINLAAPPGETRDKSLAAFREEMERCTRLGIGTIVMHPGAHLGDGEETGIRRICEAFNRLIPAVPEFTGVILLETTAGQGTSLGHTFEQLAAIIAGTAFPDRFAVCFDTCHTFAAGYDFTTGEGYRRVFAEFDRLIGLDRLRCFHLNDSRKGLNSRVDRHEHIGRGTLGLEPFRFLMNDDRFTTVPKILETPKGDDDEFDIMNLNTLRRLVRRRTTKERTEPCPS.

Zn(2+) is bound by residues His-68, His-108, Glu-145, Asp-179, His-182, His-216, Asp-229, His-231, and Glu-261.

It belongs to the AP endonuclease 2 family. Zn(2+) is required as a cofactor.

The catalysed reaction is Endonucleolytic cleavage to 5'-phosphooligonucleotide end-products.. Endonuclease IV plays a role in DNA repair. It cleaves phosphodiester bonds at apurinic or apyrimidinic (AP) sites, generating a 3'-hydroxyl group and a 5'-terminal sugar phosphate. This is Probable endonuclease 4 from Geobacter sulfurreducens (strain ATCC 51573 / DSM 12127 / PCA).